We begin with the raw amino-acid sequence, 204 residues long: Prephenate decarboxylase (204 aa).

Belongs to the prephenate decarboxylase family.

Its subcellular location is the cytoplasm. The enzyme catalyses prephenate + H(+) = 3-[(4R)-4-hydroxycyclohexa-1,5-dien-1-yl]-2-oxopropanoate + CO2. The protein operates within antibiotic biosynthesis; bacilysin biosynthesis. Part of the bacABCDEF operon responsible for the biosynthesis of the nonribosomally synthesized dipeptide antibiotic bacilysin, composed of L-alanine and L-anticapsin. Bacilysin is an irreversible inactivator of the glutaminase domain of glucosamine synthetase. BacA is an unusual prephenate decarboxylase that avoids the typical aromatization of the cyclohexadienol ring of prephenate. BacA catalyzes the protonation of prephenate (1-carboxy-4-hydroxy-alpha-oxo-2,5-cyclohexadiene-1-propanoic acid) at C6 position, followed by a decarboxylation to produce the endocyclic-delta(4),delta(8)-7R-dihydro-hydroxyphenylpyruvate (en-H2HPP). En-H2HPP is able to undergo a slow nonenzymatic isomerization to produce the exocyclic-delta(3),delta(5)-dihydro-hydroxyphenylpyruvate (ex-H2HPP). BacA isomerizes only the pro-R double bond in prephenate. The sequence is that of Prephenate decarboxylase from Bacillus amyloliquefaciens (Bacillus velezensis).